The following is an 81-amino-acid chain: Large ribosomal subunit protein bL27 (81 aa).

Polar residues predominate over residues 1–11 (MATSKSGGSSK). Residues 1–24 (MATSKSGGSSKNGRDSISKRLGVK) are disordered.

This sequence belongs to the bacterial ribosomal protein bL27 family.

The sequence is that of Large ribosomal subunit protein bL27 from Borrelia duttonii (strain Ly).